The sequence spans 202 residues: Protein FAR-RED ELONGATED HYPOCOTYL 1 (202 aa).

Serine 39 carries the post-translational modification Phosphoserine. The Nuclear localization sequence (NLS) motif lies at 40–43 (KKRK). The Nuclear export sequence (NES) motif lies at 54–57 (LLPL). A Phosphothreonine modification is found at threonine 61.

The protein belongs to the FHY1 protein family. As to quaternary structure, homodimer and heterodimer with FHL. Interacts with underphosphorylated PHYA, especially upon far-red (FR) light illumination. Binds to LAF1 and HFR1. Forms PHYA/FHY1/HFR1 complex in darkness but dissociates from PHYA and HFR1 in response to continuous FR light (FRc). In terms of processing, inactivated by rapid reversible PHYA-mediated phosphorylation at Ser-39 and Thr-61 in red light (R), thus inhibiting PHYA signaling in a negative feedback loop; this ensures the seedling deetiolation process in response to a R-enriched light condition. Subsequent exposure to far-red light (FR) after the R conditions leads to dephosphorylation. The phosphorylated form is cytoplasmic only and unable to bind to chromatin at direct target genes whereas the unphosphorylated form can shuttle from cytoplasm to nucleus. As to expression, expressed in hypocotyl cells of etiolated plants.

Its subcellular location is the nucleus. It localises to the cytoplasm. In terms of biological role, key regulator of far red / red (FR/R) spectrum-specific responses essential for the adaption to changing light conditions (e.g. de-etiolation), essentially by regulating PHYA shuttling from the cytoplasm to the nucleus and by directly regulating the expression of some target genes, depending on light conditions and phosphorylation status. Binds chromatin at target genes promoters, especially in FR light conditions. Can activate transcription of different genes, some being in a phytochrome A (PHYA)-dependent and other in a PHYA-independent manners. Controls specific aspects of plant development, such as the inhibition of seed germination under FR during salt stress. Essential for light-regulated PHYA nuclear accumulation and subsequent PHYA phototropic signaling processes involved in photomorphogenesis. Mediates the association of PHYA with HFR1 and LAF1 in the nucleus in response to FR conditions. PHYA-specific signal transducer in response to continuous FR lights. Contributes to inhibition of hypocotyl elongation in continuous blue light (B). The protein is Protein FAR-RED ELONGATED HYPOCOTYL 1 of Arabidopsis thaliana (Mouse-ear cress).